The following is a 473-amino-acid chain: Myocyte-specific enhancer factor 2C (473 aa).

The 55-residue stretch at 3 to 57 (RKKIQITRIMDERNRQVTFTKRKFGLMKKAYELSVLCDCEIALIIFNSTNKLFQY) folds into the MADS-box domain. The residue at position 4 (K4) is an N6-acetyllysine. Positions 58-86 (ASTDMDKVLLKYTEYNEPHESRTNSDIVE) form a DNA-binding region, mef2-type. S59 carries the phosphoserine; by CK2 modification. A disordered region spans residues 91–116 (KGLNGCDSPDPDADDSVGHSPESEDK). S98, S106, and S110 each carry phosphoserine. N6-acetyllysine occurs at positions 116 and 119. A disordered region spans residues 180-224 (NSMSPGVTHRPPSAGNTGGLMGGDLTSGAGTSAGNGYGNPRNSPG). S222 and S228 each carry phosphoserine. Residues K234 and K239 each carry the N6-acetyllysine modification. Residue S240 is modified to Phosphoserine. Residues K252 and K264 each carry the N6-acetyllysine modification. Positions 271-278 (SEDVDLLL) are beta domain. A phosphothreonine; by MAPK14 mark is found at T293 and T300. A transcription repressor region spans residues 368–399 (ACTSTHLSQSSNLSLPSTQSLNIKSEPVSPPR). Positions 375–390 (SQSSNLSLPSTQSLNI) are enriched in polar residues. Positions 375-473 (SQSSNLSLPS…RMRLSEGWAT (99 aa)) are disordered. K391 participates in a covalent cross-link: Glycyl lysine isopeptide (Lys-Gly) (interchain with G-Cter in SUMO). The residue at position 396 (S396) is a Phosphoserine; by CDK5. Phosphoserine; by MAPK7 is present on S419. The segment covering 419 to 432 (SPVDSLSSCSSSYD) has biased composition (low complexity). The segment covering 433-443 (GSDREDHRNEF) has biased composition (basic and acidic residues). Phosphoserine is present on S445.

The protein belongs to the MEF2 family. Forms a complex with class II HDACs in undifferentiating cells. On myogenic differentiation, HDACs are released into the cytoplasm allowing MEF2s to interact with other proteins for activation. Interacts with EP300 in differentiating cells; the interaction acetylates MEF2C leading to increased DNA binding and activation. Interacts with HDAC7 and CARM1. Interacts with HDAC4 and HDAC9; the interaction with HDACs represses transcriptional activity. Interacts with LPIN1. Interacts with MYOCD. Interacts with AKAP13. Interacts with FOXK1; the interaction inhibits MEF2C transactivation activity. Interacts (via N-terminus) with HABP4; this interaction decreases DNA-binding activity of MEF2C in myocardial cells in response to mechanical stress. Interacts with JPH2; interaction specifically takes place with the Junctophilin-2 N-terminal fragment cleavage product of JPH2. Interacts (via MADS box) with SOX18. Interacts with PHF7; the interaction promotes MEF2C binding to its transcription targets. Phosphorylation on Ser-59 enhances DNA binding activity. Phosphorylation on Ser-396 is required for Lys-391 sumoylation and inhibits transcriptional activity. Post-translationally, acetylated by p300 on several sites in diffentiating myocytes. Acetylation on Lys-4 increases DNA binding and transactivation. In terms of processing, sumoylated on Lys-391 with SUMO2 but not by SUMO1 represses transcriptional activity. Proteolytically cleaved in cerebellar granule neurons, probably by caspase 7, following neurotoxicity. Preferentially cleaves the CDK5-mediated hyperphosphorylated form which leads to neuron apoptosis and transcriptional inactivation. Expressed in brain and skeletal muscle.

It localises to the nucleus. It is found in the cytoplasm. Its subcellular location is the sarcoplasm. Its function is as follows. Transcription activator which binds specifically to the MEF2 element present in the regulatory regions of many muscle-specific genes. Controls cardiac morphogenesis and myogenesis, and is also involved in vascular development. Enhances transcriptional activation mediated by SOX18. Plays an essential role in hippocampal-dependent learning and memory by suppressing the number of excitatory synapses and thus regulating basal and evoked synaptic transmission. Crucial for normal neuronal development, distribution, and electrical activity in the neocortex. Necessary for proper development of megakaryocytes and platelets and for bone marrow B-lymphopoiesis. Required for B-cell survival and proliferation in response to BCR stimulation, efficient IgG1 antibody responses to T-cell-dependent antigens and for normal induction of germinal center B-cells. May also be involved in neurogenesis and in the development of cortical architecture. Isoforms that lack the repressor domain are more active than isoform 1. The sequence is that of Myocyte-specific enhancer factor 2C from Homo sapiens (Human).